The following is a 654-amino-acid chain: Biotin-dependent 3-methylcrotonyl-coenzyme A carboxylase alpha1 subunit (654 aa).

Residues 1 to 448 (MFDTVLVANR…DTAVLDERSA (448 aa)) form the Biotin carboxylation domain. The ATP-grasp domain occupies 120–319 (KNAVAAFDVP…LVEWQLRVGA (200 aa)). ATP is bound at residue 148–209 (AAEVGYPVLI…ERFVLRPRHI (62 aa)). Mg(2+) is bound by residues Glu-275, Glu-290, and Asn-292. The Mn(2+) site is built by Glu-275, Glu-290, and Asn-292. Residues 578-653 (HRAVGARPAE…KVEQVLARIK (76 aa)) enclose the Biotinyl-binding domain. Lys-620 carries the N6-biotinyllysine modification.

As to quaternary structure, the biotin-dependent acyl-CoA carboxylase complex is composed of AccA1, which contains the biotin carboxylase (BC) and biotin carboxyl carrier protein (BCCP) domains, and AccD1, which contains the carboxyl transferase (CT) domain. The AccA1/AccD1 complex forms a dodecamer. The cofactor is Mg(2+). Mn(2+) serves as cofactor. Biotin is required as a cofactor.

The enzyme catalyses N(6)-biotinyl-L-lysyl-[protein] + hydrogencarbonate + ATP = N(6)-carboxybiotinyl-L-lysyl-[protein] + ADP + phosphate + H(+). It functions in the pathway amino-acid degradation; L-leucine degradation. Functionally, component of a biotin-dependent acyl-CoA carboxylase complex. This subunit catalyzes the ATP-dependent carboxylation of the biotin carried by the biotin carboxyl carrier (BCC) domain, resulting in the formation of carboxyl biotin. When associated with the beta1 subunit AccD1, is involved in branched amino-acid catabolism with methylcrotonyl coenzyme A as the substrate. The chain is Biotin-dependent 3-methylcrotonyl-coenzyme A carboxylase alpha1 subunit (accA1) from Mycobacterium bovis (strain ATCC BAA-935 / AF2122/97).